A 469-amino-acid polypeptide reads, in one-letter code: MNPNQKIITIGVVNTTLSTIALLIGVGNLIFNTVIHEKIGDHQTVVYPTITAPVVPNCSDTIITYNNTVINNITTTIITEAERHFKPSLPLCPFRGFFPFHKDNAIRLGENKDVIVTREPYVSCDNDNCWSFALAQGALLGTKHSNGTIKDRTPYRSLIRFPIGTAPVLGNYKEICVAWSSSSCFDGKEWMHVCMTGNDNDASAQIIYAGKMTDSIKSWRRDILRTQESECQCIDGTCVVAVTDGPAANSADHRVYWIREGKVIKYENVPKTKIQHLEECSCYVDTDVYCVCRDNWKGSNRPWMRINNETILETGYVCSKFHSDTPRPADPSTVSCDSPSNVNGGPGVKGFGFKTGDDVWLGRTVSTNGRSGFEIIKVTEGWINSPNHAKSVTQTLVSNNDWSGYSGSFIVENNGCFQPCFYIELIRGRTNKNDDVSWTSNSIVTFCGLDNEPGSGNWPDGSNIGFMPK.

Residues 1-6 (MNPNQK) are Intravirion-facing. The helical transmembrane segment at 7 to 29 (IITIGVVNTTLSTIALLIGVGNL) threads the bilayer. Positions 11–33 (GVVNTTLSTIALLIGVGNLIFNT) are involved in apical transport and lipid raft association. Over 30-469 (IFNTVIHEKI…DGSNIGFMPK (440 aa)) the chain is Virion surface. The segment at 36–88 (HEKIGDHQTVVYPTITAPVVPNCSDTIITYNNTVINNITTTIITEAERHFKPS) is hypervariable stalk region. Residues Asn-57, Asn-66, and Asn-72 are each glycosylated (N-linked (GlcNAc...) asparagine; by host). Positions 91–469 (LCPFRGFFPF…DGSNIGFMPK (379 aa)) are head of neuraminidase. 8 disulfides stabilise this stretch: Cys-92/Cys-416, Cys-124/Cys-129, Cys-184/Cys-231, Cys-233/Cys-238, Cys-280/Cys-292, Cys-282/Cys-290, Cys-318/Cys-336, and Cys-420/Cys-447. Residue Arg-118 participates in substrate binding. Asn-146 is a glycosylation site (N-linked (GlcNAc...) asparagine; by host). Asp-151 (proton donor/acceptor) is an active-site residue. Substrate is bound at residue Arg-152. 278-279 (EE) contributes to the substrate binding site. Arg-293 contacts substrate. Ca(2+) contacts are provided by Asp-294 and Gly-298. Asn-308 carries an N-linked (GlcNAc...) asparagine; by host glycan. Asp-324 serves as a coordination point for Ca(2+). Substrate is bound at residue Arg-370. Tyr-405 acts as the Nucleophile in catalysis.

The protein belongs to the glycosyl hydrolase 34 family. In terms of assembly, homotetramer. Ca(2+) serves as cofactor. N-glycosylated.

It localises to the virion membrane. The protein resides in the host apical cell membrane. It catalyses the reaction Hydrolysis of alpha-(2-&gt;3)-, alpha-(2-&gt;6)-, alpha-(2-&gt;8)- glycosidic linkages of terminal sialic acid residues in oligosaccharides, glycoproteins, glycolipids, colominic acid and synthetic substrates.. With respect to regulation, inhibited by the neuraminidase inhibitors zanamivir (Relenza) and oseltamivir (Tamiflu). These drugs interfere with the release of progeny virus from infected cells and are effective against all influenza strains. Resistance to neuraminidase inhibitors is quite rare. Its function is as follows. Catalyzes the removal of terminal sialic acid residues from viral and cellular glycoconjugates. Cleaves off the terminal sialic acids on the glycosylated HA during virus budding to facilitate virus release. Additionally helps virus spread through the circulation by further removing sialic acids from the cell surface. These cleavages prevent self-aggregation and ensure the efficient spread of the progeny virus from cell to cell. Otherwise, infection would be limited to one round of replication. Described as a receptor-destroying enzyme because it cleaves a terminal sialic acid from the cellular receptors. May facilitate viral invasion of the upper airways by cleaving the sialic acid moieties on the mucin of the airway epithelial cells. Likely to plays a role in the budding process through its association with lipid rafts during intracellular transport. May additionally display a raft-association independent effect on budding. Plays a role in the determination of host range restriction on replication and virulence. Sialidase activity in late endosome/lysosome traffic seems to enhance virus replication. The chain is Neuraminidase from Aves.